Reading from the N-terminus, the 210-residue chain is SAP domain-containing ribonucleoprotein (210 aa).

A2 bears the N-acetylalanine mark. The 35-residue stretch at 8–42 folds into the SAP domain; the sequence is LHKLKLAELKQECLARGLETKGIKQDLIHRLQAYL. K10 carries the N6-acetyllysine modification. Residues 45–64 are compositionally biased toward acidic residues; that stretch reads HAEEEANEEDVLGDETEEEE. Positions 45–86 are disordered; the sequence is HAEEEANEEDVLGDETEEEETKPIELPVKEEEPPEKTVDVAA. Over residues 65-86 the composition is skewed to basic and acidic residues; the sequence is TKPIELPVKEEEPPEKTVDVAA. Residue K142 is modified to N6-acetyllysine. The disordered stretch occupies residues 161–210; the sequence is VSSISRKSEDDEKLKKRKERFGIVTSSAGTGTTEDTEAKKRKRAERFGIA. The residue at position 163 (S163) is a Phosphoserine. Positions 184–193 are enriched in polar residues; the sequence is VTSSAGTGTT.

This sequence belongs to the SAP domain-containing ribonucleoprotein family. In terms of assembly, interacts with DDX39A. Interacts with FUS. Interacts (via the C-terminal domain) with DDX39B; the interaction is direct and facilitates RNA binding of DDX39B. Component of the transcription/export (TREX) complex at least composed of ALYREF/THOC4, DDX39B, SARNP/CIP29, CHTOP and the THO subcomplex; TREX seems to have dynamic structure involving ATP-dependent remodeling; in the complex interacts directly with DDX39B in a ATP-dependent manner which bridges it to ALYREF/THOC4. As to expression, low expression in spleen, liver, pancreas, testis, thymus, heart, and kidney. Increased levels are seen in hepatocellular carcinoma and pancreatic adenocarcinoma.

Its subcellular location is the nucleus. The protein resides in the nucleus speckle. Its function is as follows. Binds both single-stranded and double-stranded DNA with higher affinity for the single-stranded form. Specifically binds to scaffold/matrix attachment region DNA. Also binds single-stranded RNA. Enhances RNA unwinding activity of DDX39A. May participate in important transcriptional or translational control of cell growth, metabolism and carcinogenesis. Component of the TREX complex which is thought to couple mRNA transcription, processing and nuclear export, and specifically associates with spliced mRNA and not with unspliced pre-mRNA. The TREX complex is recruited to spliced mRNAs by a transcription-independent mechanism, binds to mRNA upstream of the exon-junction complex (EJC) and is recruited in a splicing- and cap-dependent manner to a region near the 5' end of the mRNA where it functions in mRNA export to the cytoplasm via the TAP/NXF1 pathway. Associates with DDX39B, which facilitates RNA binding of DDX39B and likely plays a role in mRNA export. The chain is SAP domain-containing ribonucleoprotein (SARNP) from Homo sapiens (Human).